The primary structure comprises 341 residues: MFVDKTLMITGGTGSFGNAVLSRFLKSGIINDIKEIRIFSRDEKKQEDMRIALNNPKLKFYIGDVRNYKSIDEAMHGVDYVFHAAALKQVPTCEFYPMEAINTNVLGAENVLSAAINNKVTKVIVLSTDKAVYPINAMGLSKALMEKLAIAKARMRSPGETVLCVTRYGNVMASRGSVIPLFINQIKQGKVLTITEPSMTRFLMSLVDSVDLVLYAFEHGHQGDIFVQKSPASTIEVLAKALQDIFDSKNEIRFIGTRHGEKHYESLVSSEEMAKADDLRDYYRIPMDGRDLNYAKYFVEGEKKVALLEDYTSHNTKRLNLEEVKELLLTLDYVQEELKNA.

Belongs to the polysaccharide synthase family.

It carries out the reaction UDP-alpha-D-glucose = UDP-alpha-D-galactose. Its function is as follows. Epimerizes UDP-galactose to UDP-glucose. The polypeptide is UDP-glucose 4-epimerase (capD) (Rickettsia conorii (strain ATCC VR-613 / Malish 7)).